We begin with the raw amino-acid sequence, 347 residues long: F-box/LRR-repeat/kelch-repeat protein At2g27520 (347 aa).

Positions 1–50 (MVRLDLPWDLVDEILSRLPATSLGRLRFTCKRWNALFKDPEFITKQFHKA) constitute an F-box domain. 4 LRR repeats span residues 59–82 (LSNFGVYSMSTNLKEIPNNIEIAQ), 152–177 (CKLVEIFELKSNSWRVLSKVHPNVEK), 196–220 (KFNILSFDFTTETFRSVPLPFLYQD), and 261–285 (LSWSKSFTLEFDSLRDLPVMSILRI). The Kelch 1 repeat unit spans residues 138–187 (KSYDSYKILRITYGCKLVEIFELKSNSWRVLSKVHPNVEKHYYGGVSFKG). A Kelch 2 repeat occupies 306–347 (MIYIVGKNGFKKLSYEKDRSNLWRLPFFFSYVPSLVGLYPPM).

This chain is F-box/LRR-repeat/kelch-repeat protein At2g27520, found in Arabidopsis thaliana (Mouse-ear cress).